Consider the following 95-residue polypeptide: UPF0213 protein YPK_3712 (95 aa).

In terms of domain architecture, GIY-YIG spans 4–79; the sequence is SLWHLYLLRT…KQLSKQQKEK (76 aa).

Belongs to the UPF0213 family.

This Yersinia pseudotuberculosis serotype O:3 (strain YPIII) protein is UPF0213 protein YPK_3712.